The primary structure comprises 239 residues: Sensory rhodopsin-2 (239 aa).

Topologically, residues 1 to 3 are extracellular; the sequence is MVG. The helical transmembrane segment at 4–25 threads the bilayer; that stretch reads LTTLFWLGAIGMLVGTLAFAWA. The Cytoplasmic portion of the chain corresponds to 26 to 33; sequence GRDAGSGE. Residues 34–55 traverse the membrane as a helical segment; sequence RRYYVTLVGISGIAAVAYVVMA. The Extracellular portion of the chain corresponds to 56–69; sequence LGVGWVPVAERTVF. A helical transmembrane segment spans residues 70–91; that stretch reads APRYIDWILTTPLIVYFLGLLA. Residues 92 to 94 are Cytoplasmic-facing; the sequence is GLD. Residues 95-117 traverse the membrane as a helical segment; it reads SREFGIVITLNTVVMLAGFAGAM. Residues 118 to 121 are Extracellular-facing; sequence VPGI. The chain crosses the membrane as a helical span at residues 122 to 149; sequence ERYALFGMGAVAFLGLVYYLVGPMTESA. The Cytoplasmic portion of the chain corresponds to 150–153; sequence SQRS. Residues 154–181 form a helical membrane-spanning segment; it reads SGIKSLYVRLRNLTVILWAIYPFIWLLG. At 182–189 the chain is on the extracellular side; it reads PPGVALLT. The helical transmembrane segment at 190–222 threads the bilayer; the sequence is PTVDVALIVYLDLVTKVGFGFIALDAAATLRAE. At Lys205 the chain carries N6-(retinylidene)lysine. The Cytoplasmic segment spans residues 223 to 239; the sequence is HGESLAGVDTDAPAVAD.

The protein belongs to the archaeal/bacterial/fungal opsin family. In terms of assembly, homodimer. Interacts with HTR-II.

The protein localises to the cell membrane. Functionally, photophobic photoreceptor responsible for the negative phototaxis. Activates the sensory rhodopsin II transducer (HTR-II) in response to blue light. The chain is Sensory rhodopsin-2 (sop2) from Natronomonas pharaonis (Natronobacterium pharaonis).